A 633-amino-acid chain; its full sequence is Probable potassium transport system protein Kup (633 aa).

The next 12 helical transmembrane spans lie at 21-41, 61-81, 107-127, 145-165, 176-196, 219-239, 255-275, 293-313, 345-365, 371-391, 402-422, and 427-447; these read LAVG…LYAF, LVSL…VLFL, TAVL…DAMI, PTLS…LFAI, FFGP…IMHI, GFLG…AEAL, WFVL…ALVL, ALLP…QAVI, IFLP…VLSF, LATA…IMAF, LPMA…FLGA, and IHDG…IMWT.

It belongs to the HAK/KUP transporter (TC 2.A.72) family.

The protein resides in the cell inner membrane. It catalyses the reaction K(+)(in) + H(+)(in) = K(+)(out) + H(+)(out). In terms of biological role, transport of potassium into the cell. Likely operates as a K(+):H(+) symporter. This chain is Probable potassium transport system protein Kup, found in Rhizobium rhizogenes (strain K84 / ATCC BAA-868) (Agrobacterium radiobacter).